The primary structure comprises 400 residues: Envelope glycoprotein M (400 aa).

The Intravirion segment spans residues 1-16 (MRASKSDRFLMSSWVK). The helical transmembrane segment at 17–37 (LLFVAVIMYICSAVVPMAATY) threads the bilayer. Over 38-76 (EGLGFPCYFNNLVNYSALNLTVRNSAKHLTPTLFLEKPE) the chain is Virion surface. The chain crosses the membrane as a helical span at residues 77-97 (MLVYIFWTFIVDGIAIVYYCL). Residues 98 to 113 (AAVAVYRAKHVHATTM) lie on the Intravirion side of the membrane. The helical transmembrane segment at 114-134 (MSMQSWIALLGSHSVLYVAIL) threads the bilayer. Residues 135 to 152 (RMWSMQLFIHVLSYKHVL) are Virion surface-facing. A helical transmembrane segment spans residues 153 to 173 (MAAFVYCIHFCISFAHIQSLI). Residues 174–208 (TCNSAQWEIPLLEQHVPDNTMMESLLTRWKPVCVN) are Intravirion-facing. A helical transmembrane segment spans residues 209–229 (LYLSTTALEMLLFSLSTMMAV). The Virion surface segment spans residues 230 to 234 (GNSFY). Residues 235 to 255 (VLVSDAIFGAVNMFLALTVVW) form a helical membrane-spanning segment. The Intravirion portion of the chain corresponds to 256–270 (YINTEFFLVKFMRRQ). The chain crosses the membrane as a helical span at residues 271-291 (VGFYVGVFVGYLILLLPVIRY). Topologically, residues 292 to 300 (ENAFVQANL) are virion surface. A helical transmembrane segment spans residues 301 to 321 (HYIVAINISCIPILCILAIVI). Residues 322–400 (RVIRSDWGLC…EIDETQMIFI (79 aa)) are Intravirion-facing. Residues 348-394 (DRTPTVHQKPPPLPAKTRARAKVKDISTPAPRTQYQSDHESDSEIDE) form a disordered region.

The protein belongs to the herpesviridae glycoprotein M family. In terms of assembly, interacts (via N-terminus) with gN (via N-terminus). The gM-gN heterodimer forms the gCII complex. N-glycosylated.

The protein localises to the virion membrane. It is found in the host Golgi apparatus. Its subcellular location is the host trans-Golgi network. It localises to the host endosome membrane. The protein resides in the host nucleus inner membrane. Envelope glycoprotein important for virion assembly and egress. Plays a role in the correct incorporation of gH-gL into virion membrane. Directs the glycoprotein N (gN) to the host trans-Golgi network. In Homo sapiens (Human), this protein is Envelope glycoprotein M.